Reading from the N-terminus, the 264-residue chain is Glutamate 5-kinase (264 aa).

Lysine 9 contacts ATP. Substrate is bound by residues serine 47, aspartate 132, and asparagine 144. Residues 164–165 (SD) and 206–212 (TGGIVTK) contribute to the ATP site.

This sequence belongs to the glutamate 5-kinase family.

It localises to the cytoplasm. It catalyses the reaction L-glutamate + ATP = L-glutamyl 5-phosphate + ADP. It functions in the pathway amino-acid biosynthesis; L-proline biosynthesis; L-glutamate 5-semialdehyde from L-glutamate: step 1/2. Functionally, catalyzes the transfer of a phosphate group to glutamate to form L-glutamate 5-phosphate. This Helicobacter hepaticus (strain ATCC 51449 / 3B1) protein is Glutamate 5-kinase.